The following is an 848-amino-acid chain: Translation initiation factor IF-2 (848 aa).

Residues 106–150 (TEQQTEAENSTNINLSEQTIKNNSHQSSSNTIETTQEKKQNDDLS) are disordered. The segment covering 112–139 (AENSTNINLSEQTIKNNSHQSSSNTIET) has biased composition (polar residues). A tr-type G domain is found at 347–517 (PRAPIITVMG…LLLADMLELK (171 aa)). Residues 356 to 363 (GHVDHGKT) are G1. Residue 356–363 (GHVDHGKT) participates in GTP binding. The tract at residues 381-385 (GITQH) is G2. The tract at residues 403 to 406 (DTPG) is G3. GTP is bound by residues 403–407 (DTPGH) and 457–460 (NKID). The segment at 457–460 (NKID) is G4. The interval 493–495 (SAL) is G5.

Belongs to the TRAFAC class translation factor GTPase superfamily. Classic translation factor GTPase family. IF-2 subfamily.

The protein resides in the cytoplasm. One of the essential components for the initiation of protein synthesis. Protects formylmethionyl-tRNA from spontaneous hydrolysis and promotes its binding to the 30S ribosomal subunits. Also involved in the hydrolysis of GTP during the formation of the 70S ribosomal complex. The sequence is that of Translation initiation factor IF-2 from Orientia tsutsugamushi (strain Boryong) (Rickettsia tsutsugamushi).